The sequence spans 1066 residues: Probable sucrose-phosphate synthase 4 (1066 aa).

Disordered regions lie at residues 132–166 (YAAADMSEDLSEGEKGENINESSSTHDESTRGRMP) and 688–714 (PRHPRWQKSDDATEVSEADSPGDSLRD). The span at 143-162 (EGEKGENINESSSTHDESTR) shows a compositional bias: basic and acidic residues.

Belongs to the glycosyltransferase 1 family. In terms of assembly, homodimer or homotetramer. In terms of tissue distribution, expressed in germinating seeds.

The enzyme catalyses beta-D-fructose 6-phosphate + UDP-alpha-D-glucose = sucrose 6(F)-phosphate + UDP + H(+). It functions in the pathway glycan biosynthesis; sucrose biosynthesis; sucrose from D-fructose 6-phosphate and UDP-alpha-D-glucose: step 1/2. Activity is regulated by phosphorylation and moderated by concentration of metabolites and light. Its function is as follows. Plays a role in photosynthetic sucrose synthesis by catalyzing the rate-limiting step of sucrose biosynthesis from UDP-glucose and fructose- 6-phosphate. Involved in the regulation of carbon partitioning in the leaves of plants. May regulate the synthesis of sucrose and therefore play a major role as a limiting factor in the export of photoassimilates out of the leaf. Plays a role for sucrose availability that is essential for plant growth and fiber elongation. This is Probable sucrose-phosphate synthase 4 (SPS4) from Oryza sativa subsp. japonica (Rice).